The following is a 271-amino-acid chain: 5'-AMP-activated protein kinase subunit beta-2 (271 aa).

Residues methionine 1–leucine 47 form a disordered region. Serine 38 bears the Phosphoserine; by ULK1 mark. Threonine 39 carries the post-translational modification Phosphothreonine; by ULK1. Serine 68 is subject to Phosphoserine; by ULK1. A phosphoserine mark is found at serine 94 and serine 107. Position 147 is a phosphothreonine (threonine 147). Phosphoserine is present on residues serine 157 and serine 169. The residue at position 173 (serine 173) is a Phosphoserine; by ULK1. Residue serine 183 is modified to Phosphoserine.

Belongs to the 5'-AMP-activated protein kinase beta subunit family. In terms of assembly, AMPK is a heterotrimer of an alpha catalytic subunit (PRKAA1 or PRKAA2), a beta (PRKAB1 or PRKAB2) and a gamma non-catalytic subunits (PRKAG1, PRKAG2 or PRKAG3). Post-translationally, phosphorylated when associated with the catalytic subunit (PRKAA1 or PRKAA2). Phosphorylated by ULK1 and ULK2; leading to negatively regulate AMPK activity and suggesting the existence of a regulatory feedback loop between ULK1, ULK2 and AMPK.

Its function is as follows. Non-catalytic subunit of AMP-activated protein kinase (AMPK), an energy sensor protein kinase that plays a key role in regulating cellular energy metabolism. In response to reduction of intracellular ATP levels, AMPK activates energy-producing pathways and inhibits energy-consuming processes: inhibits protein, carbohydrate and lipid biosynthesis, as well as cell growth and proliferation. AMPK acts via direct phosphorylation of metabolic enzymes, and by longer-term effects via phosphorylation of transcription regulators. Also acts as a regulator of cellular polarity by remodeling the actin cytoskeleton; probably by indirectly activating myosin. Beta non-catalytic subunit acts as a scaffold on which the AMPK complex assembles, via its C-terminus that bridges alpha (PRKAA1 or PRKAA2) and gamma subunits (PRKAG1, PRKAG2 or PRKAG3). In Rattus norvegicus (Rat), this protein is 5'-AMP-activated protein kinase subunit beta-2 (Prkab2).